Reading from the N-terminus, the 62-residue chain is MAKKLAITLTRSVIGRPEDQRITVKTLGLRKMHQTVVHNDNPAIRGMINKVAHLVTVKEIEE.

The protein belongs to the universal ribosomal protein uL30 family. As to quaternary structure, part of the 50S ribosomal subunit.

The chain is Large ribosomal subunit protein uL30 from Geobacillus thermodenitrificans (strain NG80-2).